The primary structure comprises 102 residues: Large ribosomal subunit protein uL24 (102 aa).

The protein belongs to the universal ribosomal protein uL24 family. Part of the 50S ribosomal subunit.

One of two assembly initiator proteins, it binds directly to the 5'-end of the 23S rRNA, where it nucleates assembly of the 50S subunit. In terms of biological role, one of the proteins that surrounds the polypeptide exit tunnel on the outside of the subunit. This Rhizobium leguminosarum bv. trifolii (strain WSM2304) protein is Large ribosomal subunit protein uL24.